Consider the following 84-residue polypeptide: Small ribosomal subunit protein uS17 (84 aa).

Belongs to the universal ribosomal protein uS17 family. In terms of assembly, part of the 30S ribosomal subunit.

One of the primary rRNA binding proteins, it binds specifically to the 5'-end of 16S ribosomal RNA. This Blochmanniella pennsylvanica (strain BPEN) protein is Small ribosomal subunit protein uS17.